Consider the following 316-residue polypeptide: Tetrahydromethanopterin S-methyltransferase subunit H (316 aa).

It belongs to the MtrH family. As to quaternary structure, the complex is composed of 8 subunits; MtrA, MtrB, MtrC, MtrD, MtrE, MtrF, MtrG and MtrH.

It carries out the reaction 5-methyl-5,6,7,8-tetrahydromethanopterin + coenzyme M + 2 Na(+)(in) = 5,6,7,8-tetrahydromethanopterin + methyl-coenzyme M + 2 Na(+)(out). It functions in the pathway one-carbon metabolism; methanogenesis from CO(2); methyl-coenzyme M from 5,10-methylene-5,6,7,8-tetrahydromethanopterin: step 2/2. Its function is as follows. Part of a complex that catalyzes the formation of methyl-coenzyme M and tetrahydromethanopterin from coenzyme M and methyl-tetrahydromethanopterin. This is an energy-conserving, sodium-ion translocating step. MtrH catalyzes the transfer of the methyl group from methyl-tetrahydromethanopterin to the corrinoid prosthetic group of MtrA. The polypeptide is Tetrahydromethanopterin S-methyltransferase subunit H (Methanosarcina barkeri (strain Fusaro / DSM 804)).